A 492-amino-acid polypeptide reads, in one-letter code: Phosphatidylinositol-glycan biosynthesis class W protein (492 aa).

5 helical membrane-spanning segments follow: residues 26–46 (FILT…ATFF), 59–79 (FILE…FTEL), 82–102 (FLIV…QKNV), 127–147 (YRAF…FQVF), and 156–176 (TYGI…GALV). The segment at 185 to 216 (IEKQQKKKREEEEDDNDKINKTSSSSSSSSSA) is disordered. N-linked (GlcNAc...) asparagine glycosylation occurs at N204. A compositionally biased stretch (low complexity) spans 205 to 216 (KTSSSSSSSSSA). Residues 264–284 (YGLHWNFFFTLGFVSISLAFL) form a helical membrane-spanning segment. A glycan (N-linked (GlcNAc...) asparagine) is linked at N289. The next 4 helical transmembrane spans lie at 290-310 (ISAI…NSFG), 331-351 (ICSF…GTEL), 364-384 (FATK…LCEI), and 399-419 (VLAI…ITLI). A glycan (N-linked (GlcNAc...) asparagine) is linked at N424. Transmembrane regions (helical) follow at residues 437 to 457 (LFIF…MKTI) and 464 to 484 (SMII…ILDY).

This sequence belongs to the PIGW family.

The protein localises to the endoplasmic reticulum membrane. Its pathway is glycolipid biosynthesis; glycosylphosphatidylinositol-anchor biosynthesis. Functionally, probable acetyltransferase, which acetylates the inositol ring of phosphatidylinositol during biosynthesis of GPI-anchor. This Dictyostelium discoideum (Social amoeba) protein is Phosphatidylinositol-glycan biosynthesis class W protein.